Consider the following 314-residue polypeptide: Phosphoribosylaminoimidazole-succinocarboxamide synthase (314 aa).

It belongs to the SAICAR synthetase family.

The enzyme catalyses 5-amino-1-(5-phospho-D-ribosyl)imidazole-4-carboxylate + L-aspartate + ATP = (2S)-2-[5-amino-1-(5-phospho-beta-D-ribosyl)imidazole-4-carboxamido]succinate + ADP + phosphate + 2 H(+). It functions in the pathway purine metabolism; IMP biosynthesis via de novo pathway; 5-amino-1-(5-phospho-D-ribosyl)imidazole-4-carboxamide from 5-amino-1-(5-phospho-D-ribosyl)imidazole-4-carboxylate: step 1/2. In Bacteroides fragilis (strain ATCC 25285 / DSM 2151 / CCUG 4856 / JCM 11019 / LMG 10263 / NCTC 9343 / Onslow / VPI 2553 / EN-2), this protein is Phosphoribosylaminoimidazole-succinocarboxamide synthase.